The chain runs to 1603 residues: Transcription factor Gibbin (1603 aa).

Disordered regions lie at residues 19–108 (PDYL…SSSR), 150–236 (LRLS…STDY), 264–285 (LEPPSPEPEPQLLDPQPRFLDP), and 394–467 (CRRR…RKGK). A compositionally biased stretch (pro residues) spans 30 to 47 (GGPPTPRPLLPTRPPASP). N6-acetyllysine is present on K79. Residues 166–178 (SFFSSPSLANSIR) show a composition bias toward polar residues. A compositionally biased stretch (basic and acidic residues) spans 179–194 (SPEERATPHAKSERPS). Low complexity predominate over residues 216 to 225 (PGATAAATGL). The residue at position 268 (S268) is a Phosphoserine. Positions 273–285 (PQLLDPQPRFLDP) are enriched in low complexity. A DNA-binding region (a.T hook 1) is located at residues 396 to 408 (RRKAGRGRKADAG). The span at 428-446 (EPPPPPPPPPPALPGPGPV) shows a compositional bias: pro residues. Residues 544–556 (KRKRGRPPKNLLL) constitute a DNA-binding region (a.T hook 2). The interval 581 to 607 (MPEVKKRRRRKQKLASPQPSYAADAND) is disordered. S596 is subject to Phosphoserine. K609 is covalently cross-linked (Glycyl lysine isopeptide (Lys-Gly) (interchain with G-Cter in SUMO2)). Disordered stretches follow at residues 717–792 (LTEL…RNCG) and 806–827 (LESGASGRGSYYSTGAPSGQTE). Basic residues predominate over residues 737–746 (KPKRKRRSRK). The segment covering 816–827 (YYSTGAPSGQTE) has biased composition (polar residues). Phosphoserine occurs at positions 829 and 846. R891 carries the omega-N-methylarginine modification. Residues S896 and S1064 each carry the phosphoserine modification. Disordered stretches follow at residues 1159-1198 (VSETFSESSSDSTQFNQPVGGGGFRRANSEASSSEGQSSL) and 1253-1286 (ASAAASGYPSKRSTGPRQPRGGRGGGACSAKKER). Composition is skewed to low complexity over residues 1160–1171 (SETFSESSSDST) and 1187–1198 (SEASSSEGQSSL). Residue S1187 is modified to Phosphoserine. A phosphoserine mark is found at S1322, S1324, and S1399. T1401 is modified (phosphothreonine). Position 1403 is a phosphoserine (S1403). A Glycyl lysine isopeptide (Lys-Gly) (interchain with G-Cter in SUMO2) cross-link involves residue K1409. A disordered region spans residues 1503 to 1533 (PHLASPPATPKADKEPLEMARPPGPPRGPAA). S1507 and S1549 each carry phosphoserine.

It localises to the nucleus. It is found in the chromosome. Its function is as follows. Transcription factor required for the proper patterning of the epidermis, which plays a key role in early epithelial morphogenesis. Directly binds promoter and enhancer regions and acts by maintaining local enhancer-promoter chromatin architecture. Interacts with many sequence-specific zinc-finger transcription factors and methyl-CpG-binding proteins to regulate the expression of mesoderm genes that wire surface ectoderm stratification. This chain is Transcription factor Gibbin, found in Homo sapiens (Human).